The chain runs to 719 residues: Protein psiJ (719 aa).

The N-terminal stretch at Met-1–Gly-21 is a signal peptide. Topologically, residues Asp-22 to Gly-653 are extracellular. 10 N-linked (GlcNAc...) asparagine glycosylation sites follow: Asn-46, Asn-59, Asn-86, Asn-113, Asn-301, Asn-372, Asn-435, Asn-457, Asn-562, and Asn-628. The 149-residue stretch at Gln-112 to Thr-260 folds into the PA14 domain. The chain crosses the membrane as a helical span at residues Val-654–Ala-674. Topologically, residues Leu-675–Thr-719 are cytoplasmic.

Belongs to the prespore-cell-inducing factor family.

Its subcellular location is the membrane. The chain is Protein psiJ (psiJ) from Dictyostelium discoideum (Social amoeba).